Reading from the N-terminus, the 206-residue chain is MASTDFSKIETLKQLNASLADKSYIEGTAVSQADVTVFKAFQSAYPEFSRWFNHIASKADEFDSFPAASAAAAEEEEDDDVDLFGSDDEEADAEAEKLKAERIAAYNAKKAAKPAKPAAKSIVTLDVKPWDDETNLEEMVANVKAIEMEGLTWGAHQFIPIGFGIKKLQINCVVEDDKVSLDDLQQSIEEDEDHVQSTDIAAMQKL.

The residue at position 2 (A2) is an N-acetylalanine. Residue K13 forms a Glycyl lysine isopeptide (Lys-Gly) (interchain with G-Cter in ubiquitin) linkage. Phosphoserine occurs at positions 31 and 86.

Belongs to the EF-1-beta/EF-1-delta family. In terms of assembly, the eukaryotic elongation factor 1 complex (eEF1) is probably a heterohexamer. Two trimeric complexes, each composed of eEF1A (TEF1 or TEF2), eEF1Balpha (EFB1) and eEF1Bgamma (CAM1 or TEF4), are probably dimerized via the eF1Bgamma subunits. eEF1Balpha interacts directly with eEF1A. eEF1Balpha and eEF1Bgamma form the eEF1B subcomplex with the GEF activity. Post-translationally, S-thiolated in response to oxidative stress, probably inhibiting the protein and causing a reduction in protein synthesis.

It functions in the pathway protein biosynthesis; polypeptide chain elongation. Its function is as follows. Catalytic subunit of the guanine nucleotide exchange factor (GEF) (eEF1B subcomplex) of the eukaryotic elongation factor 1 complex (eEF1). Stimulates the exchange of GDP for GTP on elongation factor 1A (eEF1A), probably by displacing GDP from the nucleotide binding pocket in eEF1A. The 30-fold higher concentration of GTP compared to GDP in cells favors the formation of eEF1A-GTP, which rapidly forms a ternary complex with aminoacyl-tRNA that in turn displaces eEF1B from the complex. The chain is Elongation factor 1-beta (EFB1) from Saccharomyces cerevisiae (strain ATCC 204508 / S288c) (Baker's yeast).